A 131-amino-acid chain; its full sequence is Profilin-8 (131 aa).

An intrachain disulfide couples Cys13 to Cys115. An Involved in PIP2 interaction motif is present at residues 81–97; the sequence is AVIRGKKGSGGITVKKT. Thr111 is modified (phosphothreonine).

The protein belongs to the profilin family. As to quaternary structure, occurs in many kinds of cells as a complex with monomeric actin in a 1:1 ratio. In terms of processing, phosphorylated by MAP kinases.

The protein resides in the cytoplasm. It localises to the cytoskeleton. Its function is as follows. Binds to actin and affects the structure of the cytoskeleton. At high concentrations, profilin prevents the polymerization of actin, whereas it enhances it at low concentrations. This chain is Profilin-8, found in Zea mays (Maize).